We begin with the raw amino-acid sequence, 397 residues long: Tryptophan synthase beta chain (397 aa).

Residue lysine 91 is modified to N6-(pyridoxal phosphate)lysine.

Belongs to the TrpB family. As to quaternary structure, tetramer of two alpha and two beta chains. The cofactor is pyridoxal 5'-phosphate.

It carries out the reaction (1S,2R)-1-C-(indol-3-yl)glycerol 3-phosphate + L-serine = D-glyceraldehyde 3-phosphate + L-tryptophan + H2O. It functions in the pathway amino-acid biosynthesis; L-tryptophan biosynthesis; L-tryptophan from chorismate: step 5/5. The beta subunit is responsible for the synthesis of L-tryptophan from indole and L-serine. In Bacillus cereus (strain ZK / E33L), this protein is Tryptophan synthase beta chain.